A 398-amino-acid chain; its full sequence is Protein FAM53A (398 aa).

The segment at 85 to 253 (QWQPQSPRPG…TSTPALGGRR (169 aa)) is disordered. Positions 103–115 (VDPSESTGSSTAP) are enriched in polar residues. The span at 123–132 (SLSEPEELVR) shows a compositional bias: basic and acidic residues. The residue at position 125 (serine 125) is a Phosphoserine. Composition is skewed to low complexity over residues 176 to 193 (STGP…ASGG) and 234 to 250 (TPLP…PALG). Positions 268-276 (KRSRRKRRR) match the Nuclear localization signal motif. Phosphoserine is present on residues serine 301 and serine 304. The interval 336-398 (PGCSQRGLRT…ELDLEQIENN (63 aa)) is disordered. Positions 363–375 (GSRRSSGDPRDGD) are enriched in basic and acidic residues.

Belongs to the FAM53 family.

The protein resides in the nucleus. Functionally, may play an important role in neural development; the dorsomedial roof of the third ventricle. This chain is Protein FAM53A, found in Homo sapiens (Human).